Consider the following 76-residue polypeptide: Acyl carrier protein (76 aa).

In terms of domain architecture, Carrier spans 2–76 (KDNFTRLQSI…QDVLNYLERN (75 aa)). An O-(pantetheine 4'-phosphoryl)serine modification is found at Ser-37.

This sequence belongs to the acyl carrier protein (ACP) family. Post-translationally, 4'-phosphopantetheine is transferred from CoA to a specific serine of apo-ACP by AcpS. This modification is essential for activity because fatty acids are bound in thioester linkage to the sulfhydryl of the prosthetic group.

Its subcellular location is the plastid. The protein resides in the chloroplast. It functions in the pathway lipid metabolism; fatty acid biosynthesis. Carrier of the growing fatty acid chain in fatty acid biosynthesis. The chain is Acyl carrier protein from Phaeodactylum tricornutum (strain CCAP 1055/1).